Here is a 1014-residue protein sequence, read N- to C-terminus: MESYLNENFDVKAKHSSEEVLEKWRNLCGVVKNPKRRFRFTANLSKRYEAAAMRRTNQEKLRIAVLVSKAAFQFISGVSPSDYTVPEDVKAAGFEICADELGSIVESHDVKKLKFHGGVDGLAGKLKASPTDGLSTEAAQLSQRQELFGINKFAESEMRGFWVFVWEALQDMTLMILGVCAFVSLIVGIATEGWPKGSHDGLGIAASILLVVFVTATSDYRQSLQFRDLDKEKKKITVQVTRNGFRQKLSIYDLLPGDIVHLAIGDQVPADGLFLSGFSVVIDESSLTGESEPVMVNAQNPFLMSGTKVQDGSCKMMITTVGMRTQWGKLMATLTEGGDDETPLQVKLNGVATIIGKIGLFFAVVTFAVLVQGMFMRKLSTGTHWVWSGDEALELLEYFAIAVTIVVVAVPEGLPLAVTLSLAFAMKKMMNDKALVRHLAACETMGSATTICSDKTGTLTTNHMTVVKSCICMNVQDVANKGSSLQSEIPESAVKLLIQSIFNNTGGEVVVNKHGKTELLGTPTETAILELGLSLGGKFQEERKSYKVIKVEPFNSTKKRMGVVIELPEGGRMRAHTKGASEIVLAACDKVVNSSGEVVPLDEESIKYLNVTINEFANEALRTLCLAYMDIEGGFSPDDAIPASGFTCVGIVGIKDPVRPGVKESVELCRRAGITVRMVTGDNINTAKAIARECGILTDDGIAIEGPVFREKNQEELLELIPKIQVMARSSPMDKHTLVKQLRTTFDEVVAVTGDGTNDAPALHEADIGLAMGIAGTEVAKESADVIILDDNFSTIVTVAKWGRSVYINIQKFVQFQLTVNVVALVVNFSSACLTGSAPLTAVQLLWVNMIMDTLGALALATEPPNDELMKRLPVGRRGNFITNAMWRNILGQAVYQFIVIWILQAKGKAMFGLDGPDSTLMLNTLIFNCFVFCQVFNEISSREMEEIDVFKGILDNYVFVVVIGATVFFQIIIIEFLGTFASTTPLTITQWIFSIFIGFLGMPIAAGLKTIPV.

N-acetylmethionine is present on M1. Residues 1–160 (MESYLNENFD…NKFAESEMRG (160 aa)) are Cytoplasmic-facing. The interaction with calmodulin stretch occupies residues 20–31 (VLEKWRNLCGVV). The residue at position 45 (S45) is a Phosphoserine; by CPK1. The helical transmembrane segment at 161-181 (FWVFVWEALQDMTLMILGVCA) threads the bilayer. The Lumenal portion of the chain corresponds to 182 to 199 (FVSLIVGIATEGWPKGSH). The chain crosses the membrane as a helical span at residues 200–220 (DGLGIAASILLVVFVTATSDY). Residues 221–348 (RQSLQFRDLD…DDETPLQVKL (128 aa)) are Cytoplasmic-facing. A helical membrane pass occupies residues 349–368 (NGVATIIGKIGLFFAVVTFA). Residues 369 to 398 (VLVQGMFMRKLSTGTHWVWSGDEALELLEY) are Lumenal-facing. Residues 399-416 (FAIAVTIVVVAVPEGLPL) traverse the membrane as a helical segment. At 417–810 (AVTLSLAFAM…KWGRSVYINI (394 aa)) the chain is on the cytoplasmic side. Residue D454 is the 4-aspartylphosphate intermediate of the active site. Positions 755 and 759 each coordinate Mg(2+). Residues 811 to 829 (QKFVQFQLTVNVVALVVNF) traverse the membrane as a helical segment. Residues 830–840 (SSACLTGSAPL) lie on the Lumenal side of the membrane. A helical membrane pass occupies residues 841-861 (TAVQLLWVNMIMDTLGALALA). The Cytoplasmic portion of the chain corresponds to 862–881 (TEPPNDELMKRLPVGRRGNF). A helical transmembrane segment spans residues 882 to 904 (ITNAMWRNILGQAVYQFIVIWIL). Over 905 to 916 (QAKGKAMFGLDG) the chain is Lumenal. Residues 917 to 938 (PDSTLMLNTLIFNCFVFCQVFN) traverse the membrane as a helical segment. The Cytoplasmic portion of the chain corresponds to 939 to 956 (EISSREMEEIDVFKGILD). Residues 957–978 (NYVFVVVIGATVFFQIIIIEFL) form a helical membrane-spanning segment. Over 979 to 988 (GTFASTTPLT) the chain is Lumenal. The helical transmembrane segment at 989 to 1010 (ITQWIFSIFIGFLGMPIAAGLK) threads the bilayer. Topologically, residues 1011-1014 (TIPV) are cytoplasmic.

Belongs to the cation transport ATPase (P-type) (TC 3.A.3) family. Type IIB subfamily.

The protein resides in the endoplasmic reticulum membrane. The catalysed reaction is Ca(2+)(in) + ATP + H2O = Ca(2+)(out) + ADP + phosphate + H(+). Its activity is regulated as follows. Activated by calmodulin. Functionally, this magnesium-dependent enzyme catalyzes the hydrolysis of ATP coupled with the translocation of calcium from the cytosol into the endoplasmic reticulum. The protein is Calcium-transporting ATPase 2, plasma membrane-type (ACA2) of Arabidopsis thaliana (Mouse-ear cress).